The following is a 316-amino-acid chain: Ribose-phosphate pyrophosphokinase (316 aa).

ATP is bound by residues 39-41 (DGE) and 98-99 (RQ). 2 residues coordinate Mg(2+): H133 and D172. The active site involves K195. Residues R197, D221, and 225 to 229 (DTANT) contribute to the D-ribose 5-phosphate site.

This sequence belongs to the ribose-phosphate pyrophosphokinase family. Class I subfamily. In terms of assembly, homohexamer. It depends on Mg(2+) as a cofactor.

The protein resides in the cytoplasm. It catalyses the reaction D-ribose 5-phosphate + ATP = 5-phospho-alpha-D-ribose 1-diphosphate + AMP + H(+). It participates in metabolic intermediate biosynthesis; 5-phospho-alpha-D-ribose 1-diphosphate biosynthesis; 5-phospho-alpha-D-ribose 1-diphosphate from D-ribose 5-phosphate (route I): step 1/1. Its function is as follows. Involved in the biosynthesis of the central metabolite phospho-alpha-D-ribosyl-1-pyrophosphate (PRPP) via the transfer of pyrophosphoryl group from ATP to 1-hydroxyl of ribose-5-phosphate (Rib-5-P). The polypeptide is Ribose-phosphate pyrophosphokinase (Nitrosomonas europaea (strain ATCC 19718 / CIP 103999 / KCTC 2705 / NBRC 14298)).